Reading from the N-terminus, the 260-residue chain is Transcriptional activator protein AsaR (260 aa).

One can recognise an HTH luxR-type domain in the interval 176-241; that stretch reads EDDPQEALTD…QAIAKGVSSG (66 aa). A DNA-binding region (H-T-H motif) is located at residues 200 to 219; that stretch reads SGEIACILGITERTVNYHLN.

It belongs to the autoinducer-regulated transcriptional regulatory protein family.

Functionally, functions as a BHL-responsive transcriptional regulator. The polypeptide is Transcriptional activator protein AsaR (Aeromonas salmonicida).